The following is a 980-amino-acid chain: NACHT, LRR and PYD domains-containing protein 7 (980 aa).

The 93-residue stretch at Met-1–Glu-93 folds into the Pyrin domain. The disordered stretch occupies residues Glu-104 to Trp-123. Basic and acidic residues predominate over residues Glu-113–Trp-123. The NACHT domain occupies Tyr-172 to Asp-491. Gly-178–Thr-185 contributes to the ATP binding site. 9 LRR repeats span residues Cys-614–Leu-638, Asn-674–Asp-697, Lys-760–Val-784, Asn-788–Tyr-810, Lys-817–Ala-840, Ser-845–Glu-868, Asp-874–Glu-897, Ala-902–Asn-928, and Leu-933–Lys-957.

This sequence belongs to the NLRP family. Directly interacts with CASP1 and IL1B. As to expression, expressed in numerous tissues including uterus and ovary, with low levels in heart and brain. Not detected in skeletal muscle.

Its function is as follows. Inhibits CASP1/caspase-1-dependent IL1B secretion. This Homo sapiens (Human) protein is NACHT, LRR and PYD domains-containing protein 7 (NLRP7).